Reading from the N-terminus, the 280-residue chain is Succinate dehydrogenase [ubiquinone] iron-sulfur subunit, mitochondrial (280 aa).

The N-terminal 28 residues, 1-28, are a transit peptide targeting the mitochondrion; the sequence is MAAVVAVSLKRWFPATTLGGACLQACRG. In terms of domain architecture, 2Fe-2S ferredoxin-type spans 40–131; it reads KKFAIYRWDP…DKVSKIYPLP (92 aa). Residues Lys51 and Lys55 each carry the N6-acetyllysine modification. [2Fe-2S] cluster is bound by residues Cys93, Cys98, Cys101, and Cys113. Residues 146-218 form an interaction with SDHAF1 region; it reads FYAQYKSIEP…PAVLMQAYRW (73 aa). A 4Fe-4S ferredoxin-type domain is found at 176 to 206; it reads EREKLDGLYECILCACCSTSCPSYWWNGDKY. Residues Cys186, Cys189, and Cys192 each contribute to the [4Fe-4S] cluster site. Cys196 contributes to the [3Fe-4S] cluster binding site. Trp201 is an a ubiquinone binding site. [3Fe-4S] cluster contacts are provided by Cys243 and Cys249. [4Fe-4S] cluster is bound at residue Cys253.

This sequence belongs to the succinate dehydrogenase/fumarate reductase iron-sulfur protein family. In terms of assembly, component of complex II composed of four subunits: the flavoprotein (FP) SDHA, iron-sulfur protein (IP) SDHB, and a cytochrome b560 composed of SDHC and SDHD. Interacts with SDHAF1; the interaction is required for iron-sulfur cluster incorporation into SDHB. The cofactor is [2Fe-2S] cluster. [3Fe-4S] cluster serves as cofactor. [4Fe-4S] cluster is required as a cofactor.

The protein resides in the mitochondrion inner membrane. It carries out the reaction a quinone + succinate = fumarate + a quinol. The enzyme catalyses (R)-malate + a quinone = enol-oxaloacetate + a quinol. It catalyses the reaction (S)-malate + a quinone = enol-oxaloacetate + a quinol. The protein operates within carbohydrate metabolism; tricarboxylic acid cycle; fumarate from succinate (eukaryal route): step 1/1. Enol-oxaloacetate inhibits the succinate dehydrogenase activity. Iron-sulfur protein (IP) subunit of the succinate dehydrogenase complex (mitochondrial respiratory chain complex II), responsible for transferring electrons from succinate to ubiquinone (coenzyme Q). SDH also oxidizes malate to the non-canonical enol form of oxaloacetate, enol-oxaloacetate. Enol-oxaloacetate, which is a potent inhibitor of the succinate dehydrogenase activity, is further isomerized into keto-oxaloacetate. This is Succinate dehydrogenase [ubiquinone] iron-sulfur subunit, mitochondrial (SDHB) from Sus scrofa (Pig).